A 24-amino-acid chain; its full sequence is Brevinin-1JDc (24 aa).

Cys-18 and Cys-24 are oxidised to a cystine.

In terms of tissue distribution, expressed by the skin glands.

The protein localises to the secreted. In terms of biological role, has antibacterial activity against E.coli ATCC 25992 (MIC=49 uM), E.coli CIB 84492 (MIC=25 uM), S.aureus ATCC 25923 (MIC=6 uM) and S.aureus CIB 85462 (MIC=3 uM). The polypeptide is Brevinin-1JDc (Odorrana jingdongensis (Jingdong frog)).